The sequence spans 732 residues: 1,4-alpha-glucan branching enzyme GlgB (732 aa).

Aspartate 408 acts as the Nucleophile in catalysis. Residue glutamate 461 is the Proton donor of the active site.

The protein belongs to the glycosyl hydrolase 13 family. GlgB subfamily. As to quaternary structure, monomer.

The catalysed reaction is Transfers a segment of a (1-&gt;4)-alpha-D-glucan chain to a primary hydroxy group in a similar glucan chain.. Its pathway is glycan biosynthesis; glycogen biosynthesis. Catalyzes the formation of the alpha-1,6-glucosidic linkages in glycogen by scission of a 1,4-alpha-linked oligosaccharide from growing alpha-1,4-glucan chains and the subsequent attachment of the oligosaccharide to the alpha-1,6 position. This chain is 1,4-alpha-glucan branching enzyme GlgB, found in Rhodococcus jostii (strain RHA1).